Reading from the N-terminus, the 247-residue chain is Cell division protein ZapD (247 aa).

Belongs to the ZapD family. In terms of assembly, interacts with FtsZ.

The protein localises to the cytoplasm. In terms of biological role, cell division factor that enhances FtsZ-ring assembly. Directly interacts with FtsZ and promotes bundling of FtsZ protofilaments, with a reduction in FtsZ GTPase activity. This chain is Cell division protein ZapD, found in Escherichia coli O139:H28 (strain E24377A / ETEC).